Reading from the N-terminus, the 214-residue chain is Membrane antigen containing repeating peptides (214 aa).

Repeat copies occupy residues 1-14, 15-28, 29-42, and 43-56. A disordered region spans residues 1–31; that stretch reads QETSAKLADTEETLQETSAKLADTEETLQET. The interval 1–56 is 4 X 14 AA tandem repeats; sequence QETSAKLADTEETLQETSAKLADTEETLQETSAKLADTEETLQETSAKLADTEETL. The interval 180–214 is disordered; it reads CSLHPTPRRLGDVSNRENSIENKTRSASRLSGRLF. A compositionally biased stretch (basic and acidic residues) spans 188–203; sequence RLGDVSNRENSIENKT.

It is found in the membrane. The protein is Membrane antigen containing repeating peptides of Leishmania major.